Consider the following 500-residue polypeptide: Cysteine--tRNA ligase (500 aa).

Zn(2+) is bound at residue Cys30. The short motif at 32-42 (PTVYDYAHIGN) is the 'HIGH' region element. The Zn(2+) site is built by Cys224, His263, and Glu267. The 'KMSKS' region motif lies at 296–300 (KMSKS). Position 299 (Lys299) interacts with ATP.

The protein belongs to the class-I aminoacyl-tRNA synthetase family. As to quaternary structure, monomer. Zn(2+) is required as a cofactor.

The protein localises to the cytoplasm. It carries out the reaction tRNA(Cys) + L-cysteine + ATP = L-cysteinyl-tRNA(Cys) + AMP + diphosphate. The polypeptide is Cysteine--tRNA ligase (Bartonella bacilliformis (strain ATCC 35685 / KC583 / Herrer 020/F12,63)).